The primary structure comprises 119 residues: Small ribosomal subunit protein uS17 (119 aa).

The segment covering 1-21 has biased composition (low complexity); it reads MAEAKTGAKATKSAAAGAADG. The disordered stretch occupies residues 1–44; it reads MAEAKTGAKATKSAAAGAADGASKEKGPKHTPSTPKPRGRRKTR.

The protein belongs to the universal ribosomal protein uS17 family. Part of the 30S ribosomal subunit.

In terms of biological role, one of the primary rRNA binding proteins, it binds specifically to the 5'-end of 16S ribosomal RNA. The sequence is that of Small ribosomal subunit protein uS17 from Mycobacterium marinum (strain ATCC BAA-535 / M).